Consider the following 271-residue polypeptide: Tryptophan synthase alpha chain (271 aa).

Catalysis depends on proton acceptor residues glutamate 47 and aspartate 58.

This sequence belongs to the TrpA family. Tetramer of two alpha and two beta chains.

The enzyme catalyses (1S,2R)-1-C-(indol-3-yl)glycerol 3-phosphate + L-serine = D-glyceraldehyde 3-phosphate + L-tryptophan + H2O. It participates in amino-acid biosynthesis; L-tryptophan biosynthesis; L-tryptophan from chorismate: step 5/5. Functionally, the alpha subunit is responsible for the aldol cleavage of indoleglycerol phosphate to indole and glyceraldehyde 3-phosphate. This is Tryptophan synthase alpha chain from Thermus thermophilus (strain ATCC BAA-163 / DSM 7039 / HB27).